The primary structure comprises 365 residues: MQNVGPTEPSKSQVFRCPAAGCKAVYRKEGKLRDHMAGHSEQKLWKCGKKDCGKMFARKRQIQKHMKRHLTLKKHSCPTAGCKMTFSTKKSLSRHKLYKHGDAVPLKCSVPGCKRSFRKKRALRIHVSEHSNEPLSVCDVPGCGWKSTSAAKLAAHHRRHGGYRCSYEDCQTVSPTWTALQTHLKKHPLELQCAACKKPFKKASALRRHKATHAKNPLQLPCPRQDCDKIFSTVFNLTHHLRKVHLCLQTHRCPHSNCTRSFAMRESLVRHLVVHDPERKKLKLKFGRRPSKFLGRGTRCPTPVVEEDLSHLFSRKLLFHYKTRLETNLSGLFNERQLREPAEPEVNLSGLFQLPQGRPKAEKAA.

C2H2-type zinc fingers lie at residues 15–39 (FRCP…MAGH), 45–69 (WKCG…MKRH), 75–100 (HSCP…LYKH), 106–130 (LKCS…VSEH), 136–160 (SVCD…HRRH), 163–187 (YRCS…LKKH), 191–213 (LQCA…KATH), 220–245 (LPCP…RKVH), and 251–275 (HRCP…LVVH).

The 42S RNP particle comprises four subunits each of which contains one molecule of 5S RNA, three molecules of tRNA, two molecules of p50 (EF1-alpha) and one molecule of the 5S RNA binding protein 43.

P43 is a 5S RNA binding protein which is a major constituent of oocytes and comprises part of a 42S ribonucleoprotein storage particle. The protein is P43 5S RNA-binding protein of Xenopus borealis (Kenyan clawed frog).